Here is a 285-residue protein sequence, read N- to C-terminus: 4-diphosphocytidyl-2-C-methyl-D-erythritol kinase (285 aa).

Residue lysine 11 is part of the active site. 95–105 (PVAAGIGGGSA) is an ATP binding site. Residue aspartate 137 is part of the active site.

Belongs to the GHMP kinase family. IspE subfamily.

The enzyme catalyses 4-CDP-2-C-methyl-D-erythritol + ATP = 4-CDP-2-C-methyl-D-erythritol 2-phosphate + ADP + H(+). Its pathway is isoprenoid biosynthesis; isopentenyl diphosphate biosynthesis via DXP pathway; isopentenyl diphosphate from 1-deoxy-D-xylulose 5-phosphate: step 3/6. In terms of biological role, catalyzes the phosphorylation of the position 2 hydroxy group of 4-diphosphocytidyl-2C-methyl-D-erythritol. The sequence is that of 4-diphosphocytidyl-2-C-methyl-D-erythritol kinase from Paramagnetospirillum magneticum (strain ATCC 700264 / AMB-1) (Magnetospirillum magneticum).